Consider the following 86-residue polypeptide: Sodium channel neurotoxin MeuNaTxalpha-5 (86 aa).

The signal sequence occupies residues 1-19; it reads MNYLILISFALLVITGVES. The LCN-type CS-alpha/beta domain occupies 21 to 85; it reads RDAYIAKPHN…VPIRIPGKCH (65 aa). Disulfide bonds link cysteine 31–cysteine 84, cysteine 35–cysteine 57, cysteine 43–cysteine 67, and cysteine 47–cysteine 69. Arginine 86 is a propeptide (removed by a carboxypeptidase).

It belongs to the long (4 C-C) scorpion toxin superfamily. Sodium channel inhibitor family. Alpha subfamily. Expressed by the venom gland.

It is found in the secreted. Alpha toxins bind voltage-independently at site-3 of sodium channels (Nav) and inhibit the inactivation of the activated channels, thereby blocking neuronal transmission. This toxin inhibits inactivation of Nav1.6/SCN8A (EC(50)=790 nM) and drosophila DmNav1 (EC(50)=280 nM). The toxin (1 uM) does not significantly shift the midpoint of activation at the two channels, but induces a significant depolarizing shift in the V(1/2) of inactivation of the channels. Has antimicrobial activity. This chain is Sodium channel neurotoxin MeuNaTxalpha-5, found in Mesobuthus eupeus (Lesser Asian scorpion).